Reading from the N-terminus, the 139-residue chain is mRNA stability protein mug134 (139 aa).

The tract at residues Ile83–Asn139 is disordered. Over residues Ser124–Asn139 the composition is skewed to basic and acidic residues.

It belongs to the endosulfine family.

The protein localises to the nucleus. It is found in the cytoplasm. Its function is as follows. Plays an essential role in initiation of the G0 program by preventing the degradation of specific nutrient-regulated mRNAs via the 5'-3' mRNA decay pathway. This is mRNA stability protein mug134 (mug134) from Schizosaccharomyces pombe (strain 972 / ATCC 24843) (Fission yeast).